The sequence spans 347 residues: Adenine deaminase (347 aa).

3 residues coordinate Zn(2+): H16, H18, and H204. Catalysis depends on E207, which acts as the Proton donor. Position 285 (D285) interacts with Zn(2+). D286 is a binding site for substrate.

It belongs to the metallo-dependent hydrolases superfamily. Adenosine and AMP deaminases family. Adenine deaminase type 2 subfamily. Zn(2+) is required as a cofactor.

It is found in the cytoplasm. It localises to the nucleus. It carries out the reaction adenine + H2O + H(+) = hypoxanthine + NH4(+). Its function is as follows. Catalyzes the hydrolytic deamination of adenine to hypoxanthine. Plays an important role in the purine salvage pathway and in nitrogen catabolism. In Candida glabrata (strain ATCC 2001 / BCRC 20586 / JCM 3761 / NBRC 0622 / NRRL Y-65 / CBS 138) (Yeast), this protein is Adenine deaminase.